Reading from the N-terminus, the 242-residue chain is Acetoacetyl-CoA reductase (242 aa).

NADP(+) contacts are provided by residues 12-14 (RGI) and 82-86 (NAGIT). Residues Asp88 and 141–144 (QAGQ) each bind substrate. The Proton acceptor role is filled by Tyr147. 177-180 (PGYI) is a binding site for NADP(+). 178–179 (GY) serves as a coordination point for substrate.

The protein belongs to the short-chain dehydrogenases/reductases (SDR) family.

It is found in the cytoplasm. The catalysed reaction is a (3R)-3-hydroxyacyl-CoA + NADP(+) = a 3-oxoacyl-CoA + NADPH + H(+). The protein operates within biopolymer metabolism; poly-(R)-3-hydroxybutanoate biosynthesis. In Paracoccus denitrificans, this protein is Acetoacetyl-CoA reductase (phaB).